We begin with the raw amino-acid sequence, 221 residues long: MVMENEEIRYVRRRKQMVENQIARRGINDPFVLGAMGTVPRHLFVSEALMDQAYGDFPLPIGEQQTISQPYIVAEMTQALEPTGNDRVLEIGTGSGYQAAILSRIVSRVYTVERIHSLYIRARALFDRLGYYNIATRYSDGTTGWKAESPFDRIIITAGAPDIPSVLVDQLAVGGRLVAPVGTESVQSLIKLVKEKTGVRSTDLGGCRFVKLIGEHGWKEN.

S68 is an active-site residue.

It belongs to the methyltransferase superfamily. L-isoaspartyl/D-aspartyl protein methyltransferase family.

The protein localises to the cytoplasm. The catalysed reaction is [protein]-L-isoaspartate + S-adenosyl-L-methionine = [protein]-L-isoaspartate alpha-methyl ester + S-adenosyl-L-homocysteine. Functionally, catalyzes the methyl esterification of L-isoaspartyl residues in peptides and proteins that result from spontaneous decomposition of normal L-aspartyl and L-asparaginyl residues. It plays a role in the repair and/or degradation of damaged proteins. This chain is Protein-L-isoaspartate O-methyltransferase, found in Desulfosudis oleivorans (strain DSM 6200 / JCM 39069 / Hxd3) (Desulfococcus oleovorans).